The primary structure comprises 170 residues: Myosin regulatory light chain 2 (170 aa).

Positions 1-13 (MSKAAKKKSSKKR) are enriched in basic residues. The segment at 1-22 (MSKAAKKKSSKKRSGSEAAQFD) is disordered. 2 EF-hand domains span residues 24-59 (KTIQ…MGQI) and 93-128 (DPEA…KRGE). Positions 37, 39, 41, and 48 each coordinate Ca(2+).

Myosin is a hexamer of 2 heavy chains and 4 light chains (two regulatory light chains and two essential light chains).

The protein is Myosin regulatory light chain 2 (mlc-2) of Caenorhabditis elegans.